The following is a 350-amino-acid chain: Integrin beta-1-binding protein 2 (350 aa).

Zn(2+)-binding residues include Cys-5, Cys-10, Cys-24, and His-27. Positions 5 to 64 (CYNKGCGQHFDPNTNLPDSCRYHPGVPIFHDALKGWSCCRKRTVDFSEFLNIKGCTVGLH) constitute a CHORD 1 domain. Residues 28-31 (PGVP) carry the SH3-binding motif. Residues Cys-42, Cys-43, Cys-59, and His-64 each contribute to the Zn(2+) site. The SH3-binding signature appears at 70–79 (PEVPPQPEGP). Residues 72 to 92 (VPPQPEGPATSSLQEQKPLNT) are disordered. Polar residues predominate over residues 80 to 92 (ATSSLQEQKPLNT). Zn(2+) contacts are provided by Cys-150 and Cys-155. Residues 150–209 (CQNPGCDAVYQGPESDATPCTYHPGAPRFHEGMKSWSCCGIQTLDFGAFLAQPGCRVGRH) enclose the CHORD 2 domain. Residues 159-162 (YQGP) carry the SH2-binding motif. 2 residues coordinate Zn(2+): Cys-169 and His-172. Residues 173 to 176 (PGAP) carry the SH3-binding motif. Residues Cys-187, Cys-188, Cys-204, and His-209 each coordinate Zn(2+). The region spanning 216–305 (PASCRHDWHQ…ADPGSWAQLE (90 aa)) is the CS domain. Residues 235 to 238 (YGQI) carry the SH2-binding motif. A disordered region spans residues 317–350 (GVLLEMDEEESEDSDDDLSWTEEEDEEEEEAMGE). The segment covering 321-350 (EMDEEESEDSDDDLSWTEEEDEEEEEAMGE) has biased composition (acidic residues).

Interacts with beta-1 integrin subunit. This interaction is regulated by divalent cations, and it occurs only in absence of calcium. In terms of tissue distribution, expressed in skeletal and cardiac muscles but not in other tissues. Is localized in rows flanking the Z line containing alpha-actinin.

May play a role during maturation and/or organization of muscles cells. This is Integrin beta-1-binding protein 2 (Itgb1bp2) from Mus musculus (Mouse).